The chain runs to 118 residues: Large ribosomal subunit protein uL24 (118 aa).

Belongs to the universal ribosomal protein uL24 family. In terms of assembly, part of the 50S ribosomal subunit.

One of two assembly initiator proteins, it binds directly to the 5'-end of the 23S rRNA, where it nucleates assembly of the 50S subunit. Functionally, one of the proteins that surrounds the polypeptide exit tunnel on the outside of the subunit. This Parasynechococcus marenigrum (strain WH8102) protein is Large ribosomal subunit protein uL24.